Reading from the N-terminus, the 449-residue chain is C4-dicarboxylate transport protein (449 aa).

The next 8 helical transmembrane spans lie at 20-42 (YLQL…HCYP), 62-84 (IISP…VGTV), 91-113 (AMVY…AHVV), 164-181 (ILQV…LALA), 202-224 (LVQM…TIGK), 239-261 (SFYL…FSGF), 344-366 (LALF…AGFI), and 370-389 (ATLT…ILGV).

The protein belongs to the dicarboxylate/amino acid:cation symporter (DAACS) (TC 2.A.23) family.

Its subcellular location is the cell inner membrane. Functionally, responsible for the transport of dicarboxylates such as succinate, fumarate, and malate from the periplasm across the inner membrane. In Xylella fastidiosa (strain 9a5c), this protein is C4-dicarboxylate transport protein (dctA).